We begin with the raw amino-acid sequence, 256 residues long: Short chain dehydrogenase adrF (256 aa).

NADP(+) is bound by residues Ile-11, Asp-57, Arg-119, Tyr-151, Lys-155, and Val-184. Catalysis depends on Tyr-151, which acts as the Proton acceptor. Residue Lys-155 is the Lowers pKa of active site Tyr of the active site.

Belongs to the short-chain dehydrogenases/reductases (SDR) family.

Its pathway is secondary metabolite biosynthesis; terpenoid biosynthesis. Its function is as follows. Short chain dehydrogenase; part of the gene cluster that mediates the biosynthesis of andrastins, meroterpenoid compounds that exhibit inhibitory activity against ras farnesyltransferase, suggesting that they could be promising leads for antitumor agents. The first step of the pathway is the synthesis of 3,5-dimethylorsellinic acid (DMOA) by the polyketide synthase adrD via condensation of one acetyl-CoA starter unit with 3 malonyl-CoA units and 2 methylations. DMAO is then converted to farnesyl-DMAO by the prenyltransferase adrG. The methyltransferase adrK catalyzes the methylation of the carboxyl group of farnesyl-DMAO to farnesyl-DMAO methyl ester which is further converted to epoxyfarnesyl-DMAO methyl ester by the FAD-dependent monooxygenase adrH. The terpene cyclase adrI then catalyzes the carbon skeletal rearrangement to generate the andrastin E, the first compound in the pathway having the andrastin scaffold, with the tetracyclic ring system. The post-cyclization tailoring enzymes adrF, adrE, adrJ, and adrA, are involved in the conversion of andrastin E into andrastin A. The short chain dehydrogenase adrF is responsible for the oxidation of the C-3 a hydroxyl group of andrastin E to yield the corresponding ketone, andrastin D. The ketoreductase adrE stereoselectively reduces the carbonyl moiety to reverse the stereochemistry of the C-3 position to yield andrastin F. The acetyltransferase adrJ is the acetyltransferase that attaches the acetyl group to the C-3 hydroxyl group of andrastin F to yield andrastin C. Finally, the cytochrome P450 monooxygenase adrA catalyzes two sequential oxidation reactions of the C-23 methyl group, to generate the corresponding alcohol andrastin B, and aldehyde andrastin A. This chain is Short chain dehydrogenase adrF, found in Penicillium roqueforti.